We begin with the raw amino-acid sequence, 227 residues long: ATP-dependent dethiobiotin synthetase BioD (227 aa).

ATP is bound at residue D13 to Y18. A Mg(2+)-binding site is contributed by T17. K38 is a catalytic residue. Position 42 (S42) interacts with substrate. ATP contacts are provided by residues D55, E116–G119, and N179–N180. Residues D55 and E116 each coordinate Mg(2+).

This sequence belongs to the dethiobiotin synthetase family. Homodimer. Requires Mg(2+) as cofactor.

It localises to the cytoplasm. It catalyses the reaction (7R,8S)-7,8-diammoniononanoate + CO2 + ATP = (4R,5S)-dethiobiotin + ADP + phosphate + 3 H(+). It participates in cofactor biosynthesis; biotin biosynthesis; biotin from 7,8-diaminononanoate: step 1/2. Catalyzes a mechanistically unusual reaction, the ATP-dependent insertion of CO2 between the N7 and N8 nitrogen atoms of 7,8-diaminopelargonic acid (DAPA, also called 7,8-diammoniononanoate) to form a ureido ring. The protein is ATP-dependent dethiobiotin synthetase BioD of Clostridium botulinum (strain Loch Maree / Type A3).